The sequence spans 406 residues: Argininosuccinate synthase (406 aa).

ATP is bound by residues 14-22 and alanine 41; that span reads AYSGGLDTS. Positions 92 and 97 each coordinate L-citrulline. Glycine 122 contributes to the ATP binding site. L-aspartate-binding residues include threonine 124, asparagine 128, and aspartate 129. Asparagine 128 provides a ligand contact to L-citrulline. The L-citrulline site is built by arginine 132, serine 181, serine 190, glutamate 266, and tyrosine 278.

This sequence belongs to the argininosuccinate synthase family. Type 1 subfamily. In terms of assembly, homotetramer.

The protein resides in the cytoplasm. It carries out the reaction L-citrulline + L-aspartate + ATP = 2-(N(omega)-L-arginino)succinate + AMP + diphosphate + H(+). Its pathway is amino-acid biosynthesis; L-arginine biosynthesis; L-arginine from L-ornithine and carbamoyl phosphate: step 2/3. The chain is Argininosuccinate synthase from Geobacter metallireducens (strain ATCC 53774 / DSM 7210 / GS-15).